A 422-amino-acid polypeptide reads, in one-letter code: Histone deacetylase B (422 aa).

Asp102 is a substrate binding site. His144 functions as the Proton acceptor in the catalytic mechanism. Position 152 (Gly152) interacts with substrate. Asp179, His181, and Asp268 together coordinate a divalent metal cation. A substrate-binding site is contributed by Tyr307. A disordered region spans residues 399-422 (IDFDRDEDSKENMDKRKKKHNDFS). Basic residues predominate over residues 413–422 (KRKKKHNDFS).

This sequence belongs to the histone deacetylase family. HD type 1 subfamily.

It is found in the nucleus. It localises to the cytoplasm. The catalysed reaction is N(6)-acetyl-L-lysyl-[histone] + H2O = L-lysyl-[histone] + acetate. Its activity is inhibited by trichostatin A (TSA), a well known histone deacetylase inhibitor. Cytosolic activity is refractory to inhibition by TSA, while the nuclear activity is inhibited completely. Its function is as follows. Responsible for the deacetylation of lysine residues on the N-terminal part of the core histones (H2A, H2B, H3 and H4). Histone deacetylation plays an important role in transcriptional regulation, cell cycle progression and developmental events. Histone deacetylases act via the formation of large multiprotein complexes. May play a role in the regulation of the timing of gene expression during the development and in the definition aspects of the phenotype that mediate social behavior in genetically heterogeneous groups. The sequence is that of Histone deacetylase B (hdaB) from Dictyostelium discoideum (Social amoeba).